The primary structure comprises 321 residues: Olfactory receptor 51G1 (321 aa).

Topologically, residues 1 to 27 (MTILLNSSLQRATFFLTGFQGLEGLHG) are extracellular. Asn6 carries an N-linked (GlcNAc...) asparagine glycan. A helical membrane pass occupies residues 28–48 (WISIPFCFIYLTVILGNLTIL). Residues 49-56 (HVICTDAT) are Cytoplasmic-facing. Residues 57–77 (LHGPMYYFLGMLAVTDLGLCL) form a helical membrane-spanning segment. At 78–101 (STLPTVLGIFWFDTREIGIPACFT) the chain is on the extracellular side. Residues Cys99 and Cys191 are joined by a disulfide bond. Residues 102 to 122 (QLFFIHTLSSMESSVLLSMSI) form a helical membrane-spanning segment. Over 123 to 141 (DRYVAVCNPLHDSTVLTPA) the chain is Cytoplasmic. The chain crosses the membrane as a helical span at residues 142-162 (CIVKMGLSSVLRSALLILPLP). The Extracellular portion of the chain corresponds to 163–198 (FLLKRFQYCHSHVLAHAYCLHLEIMKLACSSIIVNH). The helical transmembrane segment at 199 to 219 (IYGLFVVACTVGVDSLLIFLS) threads the bilayer. Residues 220 to 239 (YALILRTVLSIASHQERLRA) are Cytoplasmic-facing. Residues 240 to 260 (LNTCVSHICAVLLFYIPMIGL) traverse the membrane as a helical segment. The Extracellular segment spans residues 261–275 (SLVHRFGEHLPRVVH). A helical transmembrane segment spans residues 276–296 (LFMSYVYLLVPPLMNPIIYSI). The Cytoplasmic portion of the chain corresponds to 297 to 321 (KTKQIRQRIIKKFQFIKSLRCFWKD).

Belongs to the G-protein coupled receptor 1 family.

The protein resides in the cell membrane. In terms of biological role, odorant receptor. In Homo sapiens (Human), this protein is Olfactory receptor 51G1 (OR51G1).